A 122-amino-acid polypeptide reads, in one-letter code: Large ribosomal subunit protein uL14 (122 aa).

The protein belongs to the universal ribosomal protein uL14 family. As to quaternary structure, part of the 50S ribosomal subunit. Forms a cluster with proteins L3 and L19. In the 70S ribosome, L14 and L19 interact and together make contacts with the 16S rRNA in bridges B5 and B8.

Binds to 23S rRNA. Forms part of two intersubunit bridges in the 70S ribosome. The sequence is that of Large ribosomal subunit protein uL14 from Thermodesulfovibrio yellowstonii (strain ATCC 51303 / DSM 11347 / YP87).